A 503-amino-acid polypeptide reads, in one-letter code: MATAIPQRQLFVAGEWRAPALGRRLPVVNPATESPIGEIPAGTAEDVDAAVAAAREALKRNRGRDWARAPGAVRAKYLRAIAAKIIERKSELARLETLDCGKPLDEAAWDMDDVAGCFEYFADLAESLDKRQNAPVSLPMENFKCYLRKEPIGVVGLITPWNYPLLMATWKVAPALAAGCTAVLKPSELASVTCLELADVCKEVGLPSGVLNIVTGLGSEAGAPLSSHPGVDKVAFTGSYETGKKIMASAAPMVKPVSLELGGKSPIVVFDDVDVEKAVEWTLFGCFWTNGQICSATSRLILHKKIAKEFQERMVAWAKNIKVSDPLEEGCRLGPVVSEGQYEKIKQFVSTAKSQGATILTGGVRPKHLEKGFYIEPTIITDVDTSMQIWREEVFGPVLCVKEFSTEEEAIELANDTHYGLAGAVLSGDRERCQRLTEEIDAGIIWVNCSQPCFCQAPWGGNKRSGFGRELGEGGIDNYLSVKQVTEYASDEPWGWYKSPSKL.

161 to 170 (WNYPLLMATW) serves as a coordination point for betaine aldehyde. 238-243 (GSYETG) contributes to the NAD(+) binding site. Betaine aldehyde contacts are provided by residues Glu260, 292 to 295 (QICS), and Cys453. Catalysis depends on residues Glu260 and Cys294. 4-aminobutanal contacts are provided by residues 260–261 (EL) and Cys294. Trp459 lines the 4-aminobutanal pocket. Positions 501–503 (SKL) match the Microbody targeting signal motif.

This sequence belongs to the aldehyde dehydrogenase family. Homodimer.

The protein localises to the peroxisome. The protein resides in the cytoplasm. It carries out the reaction betaine aldehyde + NAD(+) + H2O = glycine betaine + NADH + 2 H(+). Its pathway is amine and polyamine biosynthesis; betaine biosynthesis via choline pathway; betaine from betaine aldehyde: step 1/1. Its function is as follows. Dehydrogenase that can use N-acetyl-c-aminobutyraldehyde (NAGABald), gamma-guanidinobutyraldehyde (GGBald), betaine aldehyde (Bet-ald), gamma-aminobutyraldehyde (GAB-ald), acetaldehyde, 4-aminobutylaldehyde (AB-ald), 3-aminopropionaldehyde (AP-ald), 4-N-trimethylaminobutyraldehyde (TMAB-ald) and 3-N-trimethylaminopropionaldehyde (TMAP-ald) as substrates. Catalyzes the oxidation of GAB-ald more efficiently than Bet-ald. Mediates the conversion of GAB-ald into gamma-aminobutyric acid (GABA), and prevents the formation of 2-acetyl-1-pyrroline (2AP) which gives fragrant rice its aromatic properties. This is Betaine aldehyde dehydrogenase 2 (BADH2) from Oryza sativa subsp. indica (Rice).